Reading from the N-terminus, the 340-residue chain is MANIYYENHADLARLAGRTIAVIGFGSQGHAHALNLKESGCDVIVGLYQGSKSWSKAEGLGLKVLPVAEAAKEAQIVMLALPDTAQAAIYRDAIGPHMTPGKTLMFAHGFNIRFGQIVPPEGVDVSMVAPKAPGHRVREVYTQGGGVPALVAVHQDASGNALADALAYARGLGCTRAGVIETTFAEETETDLFGEQVVLCGGVSALVKAAFETLVEAGYQPEVAYFECMHELKLIVDLFYQGGLNYMRYSVSDTAEWGDYTAGPKIITDETRATMKRILADIQSGAFAEDWIEENHNGRPRFNAYRTRDIAHPIEQVGRELRRMMPFVNPREVVPGEGGA.

The KARI N-terminal Rossmann domain occupies 2-182; the sequence is ANIYYENHAD…GCTRAGVIET (181 aa). NADP(+)-binding positions include 25 to 28, serine 51, serine 53, and 83 to 86; these read FGSQ and DTAQ. Residue histidine 108 is part of the active site. Position 134 (glycine 134) interacts with NADP(+). One can recognise a KARI C-terminal knotted domain in the interval 183 to 328; the sequence is TFAEETETDL…RELRRMMPFV (146 aa). The Mg(2+) site is built by aspartate 191, glutamate 195, glutamate 227, and glutamate 231. Serine 252 contacts substrate.

Belongs to the ketol-acid reductoisomerase family. Requires Mg(2+) as cofactor.

It carries out the reaction (2R)-2,3-dihydroxy-3-methylbutanoate + NADP(+) = (2S)-2-acetolactate + NADPH + H(+). It catalyses the reaction (2R,3R)-2,3-dihydroxy-3-methylpentanoate + NADP(+) = (S)-2-ethyl-2-hydroxy-3-oxobutanoate + NADPH + H(+). The protein operates within amino-acid biosynthesis; L-isoleucine biosynthesis; L-isoleucine from 2-oxobutanoate: step 2/4. It participates in amino-acid biosynthesis; L-valine biosynthesis; L-valine from pyruvate: step 2/4. Its function is as follows. Involved in the biosynthesis of branched-chain amino acids (BCAA). Catalyzes an alkyl-migration followed by a ketol-acid reduction of (S)-2-acetolactate (S2AL) to yield (R)-2,3-dihydroxy-isovalerate. In the isomerase reaction, S2AL is rearranged via a Mg-dependent methyl migration to produce 3-hydroxy-3-methyl-2-ketobutyrate (HMKB). In the reductase reaction, this 2-ketoacid undergoes a metal-dependent reduction by NADPH to yield (R)-2,3-dihydroxy-isovalerate. The sequence is that of Ketol-acid reductoisomerase (NADP(+)) from Roseiflexus castenholzii (strain DSM 13941 / HLO8).